A 445-amino-acid chain; its full sequence is 2-oxoisovalerate dehydrogenase subunit alpha, mitochondrial (445 aa).

The N-terminal 45 residues, 1–45 (MAVAIAAARVWRLNRGLSQAALLLLRQPGARGLARSHPPRQQQQF), are a transit peptide targeting the mitochondrion. The interval 33 to 52 (LARSHPPRQQQQFSSLDDKP) is disordered. Thiamine diphosphate-binding residues include Tyr-158 and Arg-159. Ser-206 provides a ligand contact to K(+). Residue Ser-207 participates in thiamine diphosphate binding. The K(+) site is built by Pro-208, Thr-211, and Gln-212. Glu-238 is a binding site for Mg(2+). Thiamine diphosphate contacts are provided by Gly-239, Ala-240, and Arg-265. Mg(2+) contacts are provided by Asn-267 and Tyr-269. His-336 provides a ligand contact to thiamine diphosphate. Ser-337 carries the phosphoserine; by BCKDK modification. Thr-338 is modified (phosphothreonine). A phosphoserine mark is found at Ser-339 and Ser-347. Lys-356 carries the post-translational modification N6-acetyllysine; alternate. Residue Lys-356 is modified to N6-succinyllysine; alternate. Residue Lys-380 is modified to N6-succinyllysine.

The protein belongs to the BCKDHA family. Heterotetramer of 2 alpha/BCKDHA and 2 beta chains/BCKDHB that forms the branched-chain alpha-keto acid decarboxylase (E1) component of the BCKD complex. The branched-chain alpha-ketoacid dehydrogenase is a large complex composed of three major building blocks E1, E2 and E3. It is organized around E2, a 24-meric cubic core composed of DBT, to which are associated 6 to 12 copies of E1, and approximately 6 copies of the dehydrogenase E3, a DLD dimer. Interacts with PPM1K. Thiamine diphosphate serves as cofactor. Mg(2+) is required as a cofactor. Phosphorylated at Ser-337 by BCKDK and dephosphorylated by protein phosphatase PPM1K.

Its subcellular location is the mitochondrion matrix. The enzyme catalyses N(6)-[(R)-lipoyl]-L-lysyl-[protein] + 3-methyl-2-oxobutanoate + H(+) = N(6)-[(R)-S(8)-2-methylpropanoyldihydrolipoyl]-L-lysyl-[protein] + CO2. Functionally, together with BCKDHB forms the heterotetrameric E1 subunit of the mitochondrial branched-chain alpha-ketoacid dehydrogenase (BCKD) complex. The BCKD complex catalyzes the multi-step oxidative decarboxylation of alpha-ketoacids derived from the branched-chain amino-acids valine, leucine and isoleucine producing CO2 and acyl-CoA which is subsequently utilized to produce energy. The E1 subunit catalyzes the first step with the decarboxylation of the alpha-ketoacid forming an enzyme-product intermediate. A reductive acylation mediated by the lipoylamide cofactor of E2 extracts the acyl group from the E1 active site for the next step of the reaction. This Homo sapiens (Human) protein is 2-oxoisovalerate dehydrogenase subunit alpha, mitochondrial.